The chain runs to 211 residues: UPF0637 protein ABC2405 (211 aa).

This sequence belongs to the UPF0637 family.

This is UPF0637 protein ABC2405 from Shouchella clausii (strain KSM-K16) (Alkalihalobacillus clausii).